The following is a 962-amino-acid chain: MPRSTWFKALLLLVALWGPAVQADIGWQPLQETIRKSDKDTRQYQAIRLDNDMVVLLVSDPQAVKSLSALVVPVGSLEDPEAHQGLAHYLEHMCLMGSKKYPQADSLAEYLKRHGGSHNASTAPYRTAFYLEVENDALPGAVDRLADAIAAPLLNKKYAERERNAVNAELTMARTRDGMRMAQVSAETINPAHPGSHFSGGNLETLSDKPGNPVQQALIAFHEKYYSSNLMKAVIYSNKPLPELASIAAATYGRVPNKQIKKPEITVPVITEAQKGIIIHYVPALPRKVLRVEFRIDNNSAQFRSKTDELVSYLIGNRSPGTLSDWLQKQGLVEGISADSDPIVNGNSGVFAISATLTDKGLANRDEVVAAIFSYLNMLREKGIDKRYFDELAHVLDLDFRYPSITRDMDYVEWLADTMIRVPVAHTLDAANIADRYDPAAIKNRLAMMTPQNARIWYISPQEPHNKTAYFVDAPYQVDKISEQTFKNWQQKAQGIALSLPELNPYIPDDFTLVKNDKNYVRPELIVDKADLRVVYAPSRYFASEPKADVSVVLRNPQAMDSARNQVLFALNDYLAGMALDQLSNQAAVGGISFSTNANNGLMVTANGYTQRLPQLFLALLEGYFSYDATEEQLAQAKSWYTQMMDSAEKGKAYEQAIMPVQMISQVPYFSRDERRALLPSITLKEVMAYRNALKTGARPEFLVIGNMSEAQATSLAQDVQKQLAANGSAWCRNKDVVVEKKQSVIFEKAGSSTDSALAAVFVPVGYDEYVSAAYSAMLGQIVQPWFYNQLRTEEQLGYAVFAFPMSVGRQWGMGFLLQSNDKQPSYLWQRYQAFFPDAEAKLRAMKPEEFAQIQQAIITQMRQAPQTLGEEASRLSKDFDRGNMRFDSRDKIIAQIKLLTPQKLADFFHQAVVEPQGMAILSQIAGSQNGKAEYVHPTGWKVWDNVSALQQTLPLMSEKNE.

Residues 1–23 (MPRSTWFKALLLLVALWGPAVQA) form the signal peptide. His-88 contacts Zn(2+). The Proton acceptor role is filled by Glu-91. Residues His-92 and Glu-169 each coordinate Zn(2+).

Belongs to the peptidase M16 family. In terms of assembly, monomer. Zn(2+) serves as cofactor.

Its subcellular location is the periplasm. It carries out the reaction Preferential cleavage of 16-Tyr-|-Leu-17 and 25-Phe-|-Tyr-26 bonds of oxidized insulin B chain. Also acts on other substrates of Mw less than 7 kDa such as insulin and glucagon.. Endopeptidase that degrades small peptides of less than 7 kDa, such as glucagon and insulin. The protein is Protease 3 (ptrA) of Salmonella typhimurium (strain LT2 / SGSC1412 / ATCC 700720).